The chain runs to 350 residues: MNFLPNGICFYLSVAICWFSSRVDASWWYMGTLGSQVMCDNIPGLINKQRQLCRQHPKVMQAIGAGIKNWIGECQHQFRTHRWNCNTMAREHNLFGRLLHRSSREAAFVYAISSAGMVYTLTRACSQGELENCSCDPGKKGSSRDAKGAFDWGGCSDHVDHAIKFTQVFIDAKERKERDARALMNLHNNRAGRKAVKRFMNLECKCHGVSGSCNVRTCWLAMADFRQTGDYLRKKYNNAIQVVMNQYGTGFTSAYRMLKRPNKNDLVYFEDSPDYCIWDHESGSVGTGGRVCNRTSRGTDSCEVMCCGRGYDTSRVSRTTKCECKFQWCCAVHCRDCQEEVDVHTCKTQS.

The signal sequence occupies residues 1–25; that stretch reads MNFLPNGICFYLSVAICWFSSRVDA. Cystine bridges form between cysteine 74–cysteine 85, cysteine 125–cysteine 133, cysteine 135–cysteine 155, cysteine 204–cysteine 218, cysteine 206–cysteine 213, cysteine 276–cysteine 307, cysteine 292–cysteine 302, cysteine 306–cysteine 346, cysteine 322–cysteine 337, cysteine 324–cysteine 334, and cysteine 329–cysteine 330. A glycan (N-linked (GlcNAc...) asparagine) is linked at asparagine 132. The O-palmitoleoyl serine; by PORCN moiety is linked to residue serine 210. A glycan (N-linked (GlcNAc...) asparagine) is linked at asparagine 293.

The protein belongs to the Wnt family. Palmitoleoylation is required for efficient binding to frizzled receptors. Depalmitoleoylation leads to Wnt signaling pathway inhibition.

It is found in the secreted. The protein resides in the extracellular space. The protein localises to the extracellular matrix. Functionally, ligand for members of the frizzled family of seven transmembrane receptors. Functions in the canonical Wnt signaling pathway that results in activation of transcription factors of the TCF/LEF family. This Danio rerio (Zebrafish) protein is Protein Wnt-2 (wnt2).